Consider the following 453-residue polypeptide: uncharacterized protein (453 aa).

Residues cysteine 74, cysteine 80, cysteine 83, and cysteine 162 each coordinate [4Fe-4S] cluster. Positions 286, 315, 336, and 384 each coordinate S-adenosyl-L-methionine. Catalysis depends on cysteine 411, which acts as the Nucleophile.

It belongs to the class I-like SAM-binding methyltransferase superfamily. RNA M5U methyltransferase family.

This is an uncharacterized protein from Staphylococcus aureus (strain MW2).